The sequence spans 819 residues: Pentatricopeptide repeat-containing protein At5g02860 (819 aa).

The disordered stretch occupies residues 57 to 93 (QNPNSRQPISSQTSRNRNRTRIGKSRDPNLGKPWSYH). 18 PPR repeats span residues 172-206 (DNSV…GFSL), 207-241 (DVYS…GCKP), 242-277 (TLIT…GIAP), 278-312 (DAYT…GFSY), 313-347 (DKVT…GFSP), 348-382 (SIVT…GTKP), 383-417 (DVFT…GCKP), 418-452 (NICT…GLSP), 453-487 (DIVT…GFVP), 488-522 (ERET…GVTP), 523-557 (DLST…RCKP), 558-592 (NELT…VIEP), 593-627 (RAVL…GFSP), 628-662 (DITT…GFTP), 663-697 (SMAT…GIKP), 698-732 (DIIS…GIVP), 733-767 (DVIT…GCRP), and 768-802 (NQNT…DPHA).

Belongs to the PPR family. P subfamily.

The protein is Pentatricopeptide repeat-containing protein At5g02860 of Arabidopsis thaliana (Mouse-ear cress).